Consider the following 309-residue polypeptide: Histidine protein methyltransferase 1 homolog (309 aa).

Disordered regions lie at residues 1-37 (MSFKFNFQVDEDENDNGNNNEQNNEESKLDISEFDSS) and 79-111 (KPFKGNQDNNNDNNVNSNDKNDNNNNNNNNNKD). Residues 25–37 (EESKLDISEFDSS) show a composition bias toward basic and acidic residues. Low complexity predominate over residues 84–109 (NQDNNNDNNVNSNDKNDNNNNNNNNN). Residues 132-136 (LWECS), Gly-159, 179-181 (QDY), 209-211 (GDW), and Ser-229 contribute to the S-adenosyl-L-methionine site.

This sequence belongs to the methyltransferase superfamily. METTL18 family.

It localises to the cytoplasm. Its subcellular location is the cytosol. The protein resides in the nucleus. It is found in the nucleolus. It carries out the reaction L-histidyl-[protein] + S-adenosyl-L-methionine = N(tele)-methyl-L-histidyl-[protein] + S-adenosyl-L-homocysteine + H(+). In terms of biological role, protein-L-histidine N-tele-methyltransferase that probably monomethylates RPL3. Through the methylation of RPL3 may regulate the dynamics of pre-rRNA processing, ribosome biogenesis, and translation. The chain is Histidine protein methyltransferase 1 homolog from Dictyostelium discoideum (Social amoeba).